Reading from the N-terminus, the 164-residue chain is Diphosphoinositol polyphosphate phosphohydrolase 3-beta (164 aa).

Residues R9, 17–19 (KKR), and 38–40 (SSR) each bind substrate. One can recognise a Nudix hydrolase domain in the interval 17–144 (KKRAACLCFR…VHAEYLEKLK (128 aa)). 2 residues coordinate Mg(2+): G49 and E65. The short motif at 50–71 (GGMEPEEEPGGAAVREVYEEAG) is the Nudix box element. The active-site Proton acceptor is E68. E69 is a Mg(2+) binding site. Substrate-binding positions include 89 to 91 (RKH), R115, and K133. Residues 144 to 164 (KLGGSPTNGNSMAPSSPDSDP) form a disordered region. The span at 148–164 (SPTNGNSMAPSSPDSDP) shows a compositional bias: polar residues.

This sequence belongs to the Nudix hydrolase family. DIPP subfamily. Mg(2+) serves as cofactor. The cofactor is Mn(2+). As to expression, mainly expressed in testis and, at lower level in brain. According to PubMed:12121577, it is also expressed in pancreas and weakly expressed in thymus, prostate, ovary, lung, small intestine and heart.

It is found in the cytoplasm. The enzyme catalyses diphospho-myo-inositol polyphosphate + H2O = myo-inositol polyphosphate + phosphate.. The catalysed reaction is P(1),P(6)-bis(5'-adenosyl) hexaphosphate + H2O = adenosine 5'-pentaphosphate + AMP + 2 H(+). It catalyses the reaction P(1),P(5)-bis(5'-adenosyl) pentaphosphate + H2O = adenosine 5'-tetraphosphate + AMP + 2 H(+). Functionally, cleaves a beta-phosphate from the diphosphate groups in PP-InsP5 (diphosphoinositol pentakisphosphate), suggesting that it may play a role in signal transduction. Also able to catalyze the hydrolysis of dinucleoside oligophosphates, with Ap6A and Ap5A being the preferred substrates. The major reaction products are ADP and p4a from Ap6A and ADP and ATP from Ap5A. Also able to hydrolyze 5-phosphoribose 1-diphosphate. The polypeptide is Diphosphoinositol polyphosphate phosphohydrolase 3-beta (Homo sapiens (Human)).